Here is a 346-residue protein sequence, read N- to C-terminus: Trans-enoyl reductase FFUJ_12240 (346 aa).

40–43 (HDAK) lines the NADP(+) pocket. 124–131 (LAIATAGL) contributes to the substrate binding site. NADP(+) is bound by residues 157 to 160 (ATAT), 180 to 183 (SPSN), tyrosine 198, and 245 to 246 (LE). 266–270 (APSIL) provides a ligand contact to substrate. An NADP(+)-binding site is contributed by 335–336 (VH).

This sequence belongs to the zinc-containing alcohol dehydrogenase family.

Its function is as follows. Trans-enoyl reductase; part of the gene cluster that mediates the biosynthesis of fujikurins A-D, secondary metabolites playing a role during rice infection. The polyketide synthase PKS19 acts with the trans-enoyl reductase FFUJ_12240 and the polyketide transferase FFUJ_12241 to produce fujikurins, however, the biosynthesis pathway has not been identified yet. The chain is Trans-enoyl reductase FFUJ_12240 from Gibberella fujikuroi (strain CBS 195.34 / IMI 58289 / NRRL A-6831) (Bakanae and foot rot disease fungus).